The chain runs to 890 residues: DNA mismatch repair protein MutS (890 aa).

Glycine 607 to serine 614 provides a ligand contact to ATP. The interval glutamate 832–valine 851 is disordered.

It belongs to the DNA mismatch repair MutS family.

Functionally, this protein is involved in the repair of mismatches in DNA. It is possible that it carries out the mismatch recognition step. This protein has a weak ATPase activity. This is DNA mismatch repair protein MutS from Bacillus cereus (strain 03BB102).